Consider the following 549-residue polypeptide: Glucose-6-phosphate isomerase (549 aa).

Residue Glu-355 is the Proton donor of the active site. Active-site residues include His-387 and Lys-515.

Belongs to the GPI family.

The protein resides in the cytoplasm. It catalyses the reaction alpha-D-glucose 6-phosphate = beta-D-fructose 6-phosphate. It participates in carbohydrate biosynthesis; gluconeogenesis. It functions in the pathway carbohydrate degradation; glycolysis; D-glyceraldehyde 3-phosphate and glycerone phosphate from D-glucose: step 2/4. Its function is as follows. Catalyzes the reversible isomerization of glucose-6-phosphate to fructose-6-phosphate. The protein is Glucose-6-phosphate isomerase of Histophilus somni (strain 129Pt) (Haemophilus somnus).